The following is a 179-amino-acid chain: Large ribosomal subunit protein uL5 (179 aa).

The protein belongs to the universal ribosomal protein uL5 family. Part of the 50S ribosomal subunit; part of the 5S rRNA/L5/L18/L25 subcomplex. Contacts the 5S rRNA and the P site tRNA. Forms a bridge to the 30S subunit in the 70S ribosome.

In terms of biological role, this is one of the proteins that bind and probably mediate the attachment of the 5S RNA into the large ribosomal subunit, where it forms part of the central protuberance. In the 70S ribosome it contacts protein S13 of the 30S subunit (bridge B1b), connecting the 2 subunits; this bridge is implicated in subunit movement. Contacts the P site tRNA; the 5S rRNA and some of its associated proteins might help stabilize positioning of ribosome-bound tRNAs. The protein is Large ribosomal subunit protein uL5 of Syntrophus aciditrophicus (strain SB).